We begin with the raw amino-acid sequence, 334 residues long: Ketol-acid reductoisomerase (NADP(+)) (334 aa).

In terms of domain architecture, KARI N-terminal Rossmann spans 1 to 181 (MTTVYYDQDV…GATRAGVIET (181 aa)). Residues 25–28 (YGSQ), Arg48, Ser52, and 82–85 (DEIQ) each bind NADP(+). The active site involves His107. Gly133 is an NADP(+) binding site. Residues 182 to 327 (TFKEETETDL…RELREMMPFI (146 aa)) form the KARI C-terminal knotted domain. Mg(2+) contacts are provided by Asp190, Glu194, Glu226, and Glu230. A substrate-binding site is contributed by Ser251.

Belongs to the ketol-acid reductoisomerase family. Requires Mg(2+) as cofactor.

The catalysed reaction is (2R)-2,3-dihydroxy-3-methylbutanoate + NADP(+) = (2S)-2-acetolactate + NADPH + H(+). It catalyses the reaction (2R,3R)-2,3-dihydroxy-3-methylpentanoate + NADP(+) = (S)-2-ethyl-2-hydroxy-3-oxobutanoate + NADPH + H(+). It functions in the pathway amino-acid biosynthesis; L-isoleucine biosynthesis; L-isoleucine from 2-oxobutanoate: step 2/4. Its pathway is amino-acid biosynthesis; L-valine biosynthesis; L-valine from pyruvate: step 2/4. In terms of biological role, involved in the biosynthesis of branched-chain amino acids (BCAA). Catalyzes an alkyl-migration followed by a ketol-acid reduction of (S)-2-acetolactate (S2AL) to yield (R)-2,3-dihydroxy-isovalerate. In the isomerase reaction, S2AL is rearranged via a Mg-dependent methyl migration to produce 3-hydroxy-3-methyl-2-ketobutyrate (HMKB). In the reductase reaction, this 2-ketoacid undergoes a metal-dependent reduction by NADPH to yield (R)-2,3-dihydroxy-isovalerate. The polypeptide is Ketol-acid reductoisomerase (NADP(+)) (Staphylococcus aureus (strain MSSA476)).